Reading from the N-terminus, the 636-residue chain is Probable potassium transport system protein Kup (636 aa).

12 helical membrane passes run 22–42, 64–84, 114–134, 150–170, 182–202, 220–240, 261–281, 293–313, 351–371, 383–403, 408–428, and 433–453; these read MGLL…SPLY, ILSL…VMFI, ALMV…SMIT, FEGI…ALFL, LFGP…VHGI, FFIV…LALT, WFAL…AILL, LLAP…ATVI, IYIG…VIGF, VAVT…MLLL, PVLA…FFAA, and IVQG…LMST.

It belongs to the HAK/KUP transporter (TC 2.A.72) family.

It is found in the cell inner membrane. The enzyme catalyses K(+)(in) + H(+)(in) = K(+)(out) + H(+)(out). Functionally, transport of potassium into the cell. Likely operates as a K(+):H(+) symporter. The protein is Probable potassium transport system protein Kup of Pseudomonas entomophila (strain L48).